We begin with the raw amino-acid sequence, 265 residues long: MPAPSYSTRAAAHPSPVARKLLALMDEKKSNLCASVDVTTTAELLALVEKLAPYICMVKTHIDIVSDFSYEGTVVPLVALAKKHRFLLFEDRKFADIGNTVKHQYAGGVYQIARWADITNAHGVTGAGIVAGLKQAAEETTSEPRGLLMLAELSSKGAIAHGKYTEETVEIAKTDKEFVFGFIAQGDMGGREEGFDWVVMTPGVGLDDTGDALGQQYRTVDTVVQTGTDVIIVGRGLFGKGRHPAVEGERYRKAGWDAYTKRVSP.

Residues D37, 59 to 61 (KTH), 91 to 100 (DRKFADIGNT), Y217, and R235 each bind substrate. Residue K93 is the Proton donor of the active site.

Belongs to the OMP decarboxylase family.

The enzyme catalyses orotidine 5'-phosphate + H(+) = UMP + CO2. Its pathway is pyrimidine metabolism; UMP biosynthesis via de novo pathway; UMP from orotate: step 2/2. This Diutina rugosa (Yeast) protein is Orotidine 5'-phosphate decarboxylase (URA3).